Reading from the N-terminus, the 343-residue chain is MTPAVFLVILCLGVVPGASALDLSLDVQWQEWKIKYEKLYSPEEEVLKRVVWEENVKKIELHNRENSLGKNTYTMEINDFADMTDEEFKDMIIGFQLPVHNTEKRLWKRALGSFFPNSWNWRDALPKFVDWRNEGYVTRVRKQGGCSSCWAFPVTGAIEGQMFKKTGKLIPLSVQNLIDCSKPQGNRGCLWGNTYNAFQYVLHNGGLEAEATYPYERKEGVCRYNPKNSSAKITGFVVLPESEDVLMDAVATKGPIATGVHVISSSFRFYQKGVYHEPKCSSYVNHAVLVVGYGFEGNETDGNNYWLIKNSWGKRWGLRGYMKIAKDRNNHCAIASLAQYPTV.

Positions 1–20 (MTPAVFLVILCLGVVPGASA) are cleaved as a signal peptide. Residues 21–124 (LDLSLDVQWQ…FPNSWNWRDA (104 aa)) constitute a propeptide, activation peptide. Intrachain disulfides connect Cys-146-Cys-189 and Cys-180-Cys-222. Residue Cys-149 is part of the active site. A glycan (N-linked (GlcNAc...) asparagine) is linked at Asn-228. Cys-280 and Cys-332 are joined by a disulfide. His-286 is an active-site residue. N-linked (GlcNAc...) asparagine glycosylation occurs at Asn-298. The active site involves Asn-310.

This sequence belongs to the peptidase C1 family. In terms of tissue distribution, highly expressed in placenta.

It localises to the lysosome. This is Cathepsin Q (Ctsq) from Rattus norvegicus (Rat).